Reading from the N-terminus, the 211-residue chain is MNKGLIGKKLGMTQIFAEDGRRIAVTVVEAGPCVVVQKKSVAKDGYSAIQVGFGAKDASRANAAQVGHCKGAGAGVFTHYRELRMDNTDAYKLGDVIEAAVFEEGDLVDVTGTSIGKGFAGVIKRWGFKGGRSSHGSRFHRAPGSIGCSATPSRVFKNKKMPGQLGNEKVTVQRLKVVRVDAADNLILLGGAIPGSANGVVLIKDSVKAKK.

It belongs to the universal ribosomal protein uL3 family. As to quaternary structure, part of the 50S ribosomal subunit. Forms a cluster with proteins L14 and L19.

In terms of biological role, one of the primary rRNA binding proteins, it binds directly near the 3'-end of the 23S rRNA, where it nucleates assembly of the 50S subunit. The protein is Large ribosomal subunit protein uL3 of Citrifermentans bemidjiense (strain ATCC BAA-1014 / DSM 16622 / JCM 12645 / Bem) (Geobacter bemidjiensis).